Consider the following 259-residue polypeptide: 5'-nucleotidase SurE (259 aa).

Residues aspartate 15, aspartate 16, serine 46, and asparagine 102 each coordinate a divalent metal cation.

This sequence belongs to the SurE nucleotidase family. A divalent metal cation serves as cofactor.

The protein resides in the cytoplasm. The enzyme catalyses a ribonucleoside 5'-phosphate + H2O = a ribonucleoside + phosphate. Functionally, nucleotidase that shows phosphatase activity on nucleoside 5'-monophosphates. The chain is 5'-nucleotidase SurE from Chlorobium luteolum (strain DSM 273 / BCRC 81028 / 2530) (Pelodictyon luteolum).